Consider the following 204-residue polypeptide: Large ribosomal subunit protein eL15z (204 aa).

Belongs to the eukaryotic ribosomal protein eL15 family.

The polypeptide is Large ribosomal subunit protein eL15z (SB61) (Picea mariana (Black spruce)).